The primary structure comprises 974 residues: Bifunctional glutamine synthetase adenylyltransferase/adenylyl-removing enzyme (974 aa).

The adenylyl removase stretch occupies residues 1-464 (MKNAFLKTQL…HYAALFENEQ (464 aa)). Residues 468 to 974 (LEIGNLVFTG…YSIFKQVMKY (507 aa)) form an adenylyl transferase region.

The protein belongs to the GlnE family. It depends on Mg(2+) as a cofactor.

It carries out the reaction [glutamine synthetase]-O(4)-(5'-adenylyl)-L-tyrosine + phosphate = [glutamine synthetase]-L-tyrosine + ADP. The enzyme catalyses [glutamine synthetase]-L-tyrosine + ATP = [glutamine synthetase]-O(4)-(5'-adenylyl)-L-tyrosine + diphosphate. In terms of biological role, involved in the regulation of glutamine synthetase GlnA, a key enzyme in the process to assimilate ammonia. When cellular nitrogen levels are high, the C-terminal adenylyl transferase (AT) inactivates GlnA by covalent transfer of an adenylyl group from ATP to specific tyrosine residue of GlnA, thus reducing its activity. Conversely, when nitrogen levels are low, the N-terminal adenylyl removase (AR) activates GlnA by removing the adenylyl group by phosphorolysis, increasing its activity. The regulatory region of GlnE binds the signal transduction protein PII (GlnB) which indicates the nitrogen status of the cell. The polypeptide is Bifunctional glutamine synthetase adenylyltransferase/adenylyl-removing enzyme (Bartonella henselae (strain ATCC 49882 / DSM 28221 / CCUG 30454 / Houston 1) (Rochalimaea henselae)).